A 513-amino-acid chain; its full sequence is Plexin domain-containing protein 2 (513 aa).

The N-terminal stretch at methionine 1–cysteine 24 is a signal peptide. Residues alanine 25–threonine 438 are Extracellular-facing. N-linked (GlcNAc...) asparagine glycans are attached at residues asparagine 88, asparagine 145, asparagine 198, asparagine 206, asparagine 222, and asparagine 330. The PSI domain occupies threonine 312 to threonine 357. Residues glycine 439–valine 459 form a helical membrane-spanning segment. Over tyrosine 460–cysteine 513 the chain is Cytoplasmic.

It belongs to the plexin family.

It is found in the membrane. In Xenopus laevis (African clawed frog), this protein is Plexin domain-containing protein 2 (plxdc2).